The sequence spans 323 residues: Large ribosomal subunit protein uL10x (323 aa).

A disordered region spans residues 287 to 323; the sequence is DAGGGSAQAGAAAKVEEKKEESDEEDYEGGFGLFDEE. A Phosphoserine modification is found at S308. Residues 308-323 show a composition bias toward acidic residues; sequence SDEEDYEGGFGLFDEE. Y313 is modified (phosphotyrosine).

The protein belongs to the universal ribosomal protein uL10 family. As to quaternary structure, P0 forms a pentameric complex by interaction with dimers of P1 and P2.

Ribosomal protein P0 is the functional equivalent of E.coli protein L10. The protein is Large ribosomal subunit protein uL10x (RPP0C) of Arabidopsis thaliana (Mouse-ear cress).